The primary structure comprises 224 residues: UPF0758 protein IL0240 (224 aa).

The 123-residue stretch at 102 to 224 (GFTEPTMVKD…PISFAERGLL (123 aa)) folds into the MPN domain. Positions 173, 175, and 186 each coordinate Zn(2+). The JAMM motif signature appears at 173 to 186 (HNHPSGVAEPSQAD).

This sequence belongs to the UPF0758 family.

The protein is UPF0758 protein IL0240 of Idiomarina loihiensis (strain ATCC BAA-735 / DSM 15497 / L2-TR).